Here is a 401-residue protein sequence, read N- to C-terminus: Probable trafficking protein particle complex subunit 13 homolog (401 aa).

It belongs to the TRAPPC13 family.

The protein is Probable trafficking protein particle complex subunit 13 homolog of Caenorhabditis elegans.